The chain runs to 340 residues: SH2 domain-containing adapter protein D (340 aa).

3 disordered regions span residues 1–77, 94–186, and 198–230; these read MAKW…PKHR, GGPG…QPWE, and VQFD…ERVD. Residues 98-108 show a composition bias toward acidic residues; sequence EELEADTEYLD. Positions 171-186 are enriched in basic and acidic residues; that stretch reads PQEDERPADEYDQPWE. Positions 240–335 constitute an SH2 domain; the sequence is WFHGPLNRAD…AEHLALLYPV (96 aa).

In terms of processing, tyrosine phosphorylated by ABL.

May function as an adapter protein. The polypeptide is SH2 domain-containing adapter protein D (SHD) (Homo sapiens (Human)).